The following is a 317-amino-acid chain: Melanocyte-stimulating hormone receptor (317 aa).

Over 1 to 37 the chain is Extracellular; it reads MPMQGAQRRLLGSLNSIPTATPNLGLAANHTGAPCLE. The N-linked (GlcNAc...) asparagine glycan is linked to Asn29. Residues 38 to 63 traverse the membrane as a helical segment; it reads VSIPDWLFLSLGLVSLVQNVLVVAAI. At 64–72 the chain is on the cytoplasmic side; sequence AKNRNLHSP. Residues 73–93 traverse the membrane as a helical segment; it reads MYCFICCLALSDLLVSGSNML. Residues 94 to 118 are Extracellular-facing; sequence ETAVILMLEAGALATRASVVQQLQN. The helical transmembrane segment at 119–140 threads the bilayer; that stretch reads TIDVLTCSSMLCSLCFLGAIAL. The Cytoplasmic segment spans residues 141–163; that stretch reads DRYVSIFYALRYHSIVTLPRARR. The chain crosses the membrane as a helical span at residues 164–183; it reads AIAATWVASVLSSTLFIAYC. Residues 184–191 are Extracellular-facing; it reads DHAAVLLC. Residues 192-211 traverse the membrane as a helical segment; sequence LVVFFLAMLVLMAVLYVHML. Residues 212 to 240 are Cytoplasmic-facing; that stretch reads ARACQHAQGITRLHKRQLPAHQGFGLRGA. Residues 241–266 traverse the membrane as a helical segment; the sequence is ATLTILLGIFFLCWGPFFLHLMLVVL. The Extracellular portion of the chain corresponds to 267–279; that stretch reads CPQHLTCSCIFKN. Residues 280-300 traverse the membrane as a helical segment; that stretch reads FKVFLTLIICNTIIDPLIYAF. Residues 301–317 are Cytoplasmic-facing; the sequence is RSQELCRTLKEVLLCSW. A lipid anchor (S-palmitoyl cysteine) is attached at Cys315.

It belongs to the G-protein coupled receptor 1 family. In terms of assembly, interacts with MGRN1, but does not undergo MGRN1-mediated ubiquitination; this interaction competes with GNAS-binding and thus inhibits agonist-induced cAMP production. Interacts with OPN3; the interaction results in a decrease in MC1R-mediated cAMP signaling and ultimately a decrease in melanin production in melanocytes.

It localises to the cell membrane. Functionally, receptor for MSH (alpha, beta and gamma) and ACTH. The activity of this receptor is mediated by G proteins which activate adenylate cyclase. Mediates melanogenesis, the production of eumelanin (black/brown) and phaeomelanin (red/yellow), via regulation of cAMP signaling in melanocytes. In Alouatta seniculus (Red howler monkey), this protein is Melanocyte-stimulating hormone receptor (MC1R).